The primary structure comprises 294 residues: N-acetylmuramic acid 6-phosphate etherase (294 aa).

The SIS domain occupies 54–217 (TIHSFKSNGR…STASMIGVGK (164 aa)). Glutamate 82 serves as the catalytic Proton donor. Glutamate 113 is an active-site residue.

This sequence belongs to the GCKR-like family. MurNAc-6-P etherase subfamily. In terms of assembly, homodimer.

The enzyme catalyses N-acetyl-D-muramate 6-phosphate + H2O = N-acetyl-D-glucosamine 6-phosphate + (R)-lactate. It functions in the pathway amino-sugar metabolism; N-acetylmuramate degradation. Specifically catalyzes the cleavage of the D-lactyl ether substituent of MurNAc 6-phosphate, producing GlcNAc 6-phosphate and D-lactate. This Oceanobacillus iheyensis (strain DSM 14371 / CIP 107618 / JCM 11309 / KCTC 3954 / HTE831) protein is N-acetylmuramic acid 6-phosphate etherase.